A 398-amino-acid polypeptide reads, in one-letter code: Argininosuccinate synthase (398 aa).

An ATP-binding site is contributed by 9 to 17 (AYSGGLDTS). Residue Tyr-85 participates in L-citrulline binding. Gly-115 serves as a coordination point for ATP. Residues Thr-117, Asn-121, and Asp-122 each coordinate L-aspartate. Asn-121 is an L-citrulline binding site. 4 residues coordinate L-citrulline: Arg-125, Ser-173, Glu-258, and Tyr-270.

It belongs to the argininosuccinate synthase family. Type 1 subfamily. In terms of assembly, homotetramer.

Its subcellular location is the cytoplasm. The enzyme catalyses L-citrulline + L-aspartate + ATP = 2-(N(omega)-L-arginino)succinate + AMP + diphosphate + H(+). Its pathway is amino-acid biosynthesis; L-arginine biosynthesis; L-arginine from L-ornithine and carbamoyl phosphate: step 2/3. This Streptococcus pneumoniae (strain ATCC BAA-255 / R6) protein is Argininosuccinate synthase.